Reading from the N-terminus, the 370-residue chain is tRNA-specific 2-thiouridylase MnmA (370 aa).

ATP-binding positions include 24 to 31 and L50; that span reads AMSGGVDS. C118 functions as the Nucleophile in the catalytic mechanism. C118 and C214 are oxidised to a cystine. G142 lines the ATP pocket. The interval 164 to 166 is interaction with tRNA; it reads KDQ. C214 serves as the catalytic Cysteine persulfide intermediate.

Belongs to the MnmA/TRMU family.

The protein localises to the cytoplasm. The catalysed reaction is S-sulfanyl-L-cysteinyl-[protein] + uridine(34) in tRNA + AH2 + ATP = 2-thiouridine(34) in tRNA + L-cysteinyl-[protein] + A + AMP + diphosphate + H(+). Catalyzes the 2-thiolation of uridine at the wobble position (U34) of tRNA, leading to the formation of s(2)U34. This is tRNA-specific 2-thiouridylase MnmA from Ehrlichia ruminantium (strain Welgevonden).